The sequence spans 213 residues: 3-isopropylmalate dehydratase small subunit (213 aa).

The protein belongs to the LeuD family. LeuD type 1 subfamily. As to quaternary structure, heterodimer of LeuC and LeuD.

It carries out the reaction (2R,3S)-3-isopropylmalate = (2S)-2-isopropylmalate. It participates in amino-acid biosynthesis; L-leucine biosynthesis; L-leucine from 3-methyl-2-oxobutanoate: step 2/4. Catalyzes the isomerization between 2-isopropylmalate and 3-isopropylmalate, via the formation of 2-isopropylmaleate. The chain is 3-isopropylmalate dehydratase small subunit from Neisseria meningitidis serogroup C / serotype 2a (strain ATCC 700532 / DSM 15464 / FAM18).